The sequence spans 251 residues: Lactose phosphotransferase system repressor (251 aa).

Residues 3 to 58 form the HTH deoR-type domain; sequence KHERLDEIAKLVNKKGTIRTNEIVEGLNVSDMTVRRDLIELENKGILTKIHGGARS. Positions 20 to 39 form a DNA-binding region, H-T-H motif; the sequence is IRTNEIVEGLNVSDMTVRRD.

Its function is as follows. Repressor of the lactose catabolism operon. Galactose-6-phosphate is the inducer. In Staphylococcus aureus (strain NCTC 8325 / PS 47), this protein is Lactose phosphotransferase system repressor (lacR).